We begin with the raw amino-acid sequence, 502 residues long: Bifunctional purine biosynthesis protein PurH (502 aa).

Residues 1–144 (MKKRALISVF…KNFQDVVVIS (144 aa)) form the MGS-like domain.

This sequence belongs to the PurH family.

It carries out the reaction (6R)-10-formyltetrahydrofolate + 5-amino-1-(5-phospho-beta-D-ribosyl)imidazole-4-carboxamide = 5-formamido-1-(5-phospho-D-ribosyl)imidazole-4-carboxamide + (6S)-5,6,7,8-tetrahydrofolate. It catalyses the reaction IMP + H2O = 5-formamido-1-(5-phospho-D-ribosyl)imidazole-4-carboxamide. It functions in the pathway purine metabolism; IMP biosynthesis via de novo pathway; 5-formamido-1-(5-phospho-D-ribosyl)imidazole-4-carboxamide from 5-amino-1-(5-phospho-D-ribosyl)imidazole-4-carboxamide (10-formyl THF route): step 1/1. Its pathway is purine metabolism; IMP biosynthesis via de novo pathway; IMP from 5-formamido-1-(5-phospho-D-ribosyl)imidazole-4-carboxamide: step 1/1. This Clostridium beijerinckii (strain ATCC 51743 / NCIMB 8052) (Clostridium acetobutylicum) protein is Bifunctional purine biosynthesis protein PurH.